The chain runs to 129 residues: Small ribosomal subunit protein uS8 (129 aa).

This sequence belongs to the universal ribosomal protein uS8 family. Part of the 30S ribosomal subunit.

Its function is as follows. One of the primary rRNA binding proteins, it binds directly to 16S rRNA central domain where it helps coordinate assembly of the platform of the 30S subunit. In Thermofilum pendens (strain DSM 2475 / Hrk 5), this protein is Small ribosomal subunit protein uS8.